Consider the following 686-residue polypeptide: Band 4.1-like protein 4A (686 aa).

Residues 11–299 (FYCEVLLLDE…EHHTFFRMPE (289 aa)) form the FERM domain. At Ser304 the chain carries Phosphoserine. The disordered stretch occupies residues 331–686 (RDLSIQLPRP…IQASRLKTET (356 aa)). Over residues 357–376 (AQTQPAESNSISRITANMEN) the composition is skewed to polar residues. Ser389, Ser393, and Ser402 each carry phosphoserine. The segment covering 418 to 428 (GPQSGLYNSPS) has biased composition (polar residues). Residues 479-489 (RCNTSSGSESE) show a composition bias toward low complexity. Basic and acidic residues-rich tracts occupy residues 518-527 (VLRRQKEKNQ) and 547-561 (QAKE…KELV). The segment covering 588–601 (IRHSHSPRSYRQYR) has biased composition (basic residues). The segment covering 648 to 658 (GSKDSLMEEKP) has biased composition (basic and acidic residues). A compositionally biased stretch (polar residues) spans 673 to 686 (TIKTIQASRLKTET).

Expressed in many tissues. High levels of expression in brain, liver, thymus and peripheral blood leukocytes and low levels of expression in heart, kidney, testis and colon.

It is found in the cytoplasm. The protein resides in the cytoskeleton. This chain is Band 4.1-like protein 4A, found in Homo sapiens (Human).